Reading from the N-terminus, the 431-residue chain is Bone morphogenetic protein 7 (431 aa).

Residues 1-29 form the signal peptide; it reads MHVRSLRAAAPHSFVALWAPLFLLRSALA. Positions 30–292 are excised as a propeptide; the sequence is DFSLDNEVHS…ATEVHFRSIR (263 aa). N-linked (GlcNAc...) asparagine glycans are attached at residues Asn187, Asn302, Asn321, and Asn372. The tract at residues 291 to 311 is disordered; that stretch reads IRSTGSKQRSQNRSKTPKNQE. 3 disulfide bridges follow: Cys330-Cys396, Cys359-Cys428, and Cys363-Cys430.

The protein belongs to the TGF-beta family. As to quaternary structure, homodimer; disulfide-linked. Interacts with SOSTDC1. Interacts with TWSG1. Interacts with FBN1 (via N-terminal domain) and FBN2. Interacts with type I receptor ACVR1. Interacts with type II receptor ACVR2A. Interacts with NOG; this interaction inhibits canonical BMP signaling. Interacts with SCUBE3. Interacts with ERFE; the interaction inhibits BMP-induced transcription of HAMP. Interacts with TGFBR3. Several N-termini starting at positions 293, 300, 315 and 316 have been identified by direct sequencing resulting in secretion of different mature forms. In terms of tissue distribution, expressed in the kidney and bladder. Lower levels seen in the brain.

The protein resides in the secreted. In terms of biological role, growth factor of the TGF-beta superfamily that plays important role in various biological processes, including embryogenesis, hematopoiesis, neurogenesis and skeletal morphogenesis. Initiates the canonical BMP signaling cascade by associating with type I receptor ACVR1 and type II receptor ACVR2A. Once all three components are bound together in a complex at the cell surface, ACVR2A phosphorylates and activates ACVR1. In turn, ACVR1 propagates signal by phosphorylating SMAD1/5/8 that travel to the nucleus and act as activators and repressors of transcription of target genes. For specific functions such as growth cone collapse in developing spinal neurons and chemotaxis of monocytes, also uses BMPR2 as type II receptor. Can also signal through non-canonical pathways such as P38 MAP kinase signaling cascade that promotes brown adipocyte differentiation through activation of target genes, including members of the SOX family of transcription factors. Promotes the expression of HAMP, this is repressed by its interaction with ERFE. This chain is Bone morphogenetic protein 7 (BMP7), found in Homo sapiens (Human).